We begin with the raw amino-acid sequence, 948 residues long: MSDYKNTLNLPETGFPMRGDLAKREPGMLQHWYEQDLYGIIRNAKQGKKSFILHDGPPYANGSIHIGHSVNKILKDIIIKSKGLSGYDSPYIPGWDCHGLPIELKVEQLIGKPGEKYSAAEFREQCRAYAAEQVAGQKADFIRLGVLGDWEHPYLTMDYGTEANIIRALARIVDNGHLMKGAKPVHWCPDCGSSLAEAEVEYYDKVSPSIDVRFAAVDKAQVLAKFGVSEAKGDVNVVIWTTTPWTLPANRAVALHPELEYQLVQVEGECLILAADLVESVMKRAGIDYWQVLGSCKGEALELLHFCHPFMNFDVPIIMGDHVTLDAGTGAVHTAPGHGPDDYVVGQKYGLEIANPVGSNGCYLPGTHPVLDGLFVFKANDIVIDLLKDSGALLHVEKLTHSYPCCWRHKSPIIFRATPQWFISMDRQGLRSQSLAEIDRIERQGLDEQNLSGWIPAWGKARIESMVANRPDWCISRQRTWGVPMAMLVHKETQELHPRTTELMEMVAKRVEQAGIQAWWDLDIRDLLGDEADQYEKVPDTLDVWFDSGSTSYSVVDARPEFNGHSPDMYLEGSDQHRGWFMSSLMISVAMKGKAPYRQVLTHGFTVDGQGRKMSKSVGNVVSPQQVMNKLGGDILRLWVASTDYTSEMAVSDEILKRSADAYRRIRNTARFLLANLNGFDPCKDMVKPEDMVVLDRWAVGCAKQAQDEIIAAYENYDFHEVVQRLMQFCSVEMGSFYLDIIKDRQYTAKADSVARRSCQTALYHIAEALVRWMAPILSFTADEVWGYLPGDRAQFVFTEEWYQGLFGLDAAEQMNDAFWAELLKVRGEVNRVIEQARNDKKVGGSLEAAITLYADEALATQLDSLQDELRFVLITSAARVQPLVQATADAVASELAGLKVGLGKADGSKCPRCWHYSTAIGQDAAHPQLCPRCVTNVAGQGEERKFA.

The short motif at 58–68 (PYANGSIHIGH) is the 'HIGH' region element. E572 contacts L-isoleucyl-5'-AMP. A 'KMSKS' region motif is present at residues 613-617 (KMSKS). An ATP-binding site is contributed by K616. Zn(2+) contacts are provided by C911, C914, C931, and C934.

It belongs to the class-I aminoacyl-tRNA synthetase family. IleS type 1 subfamily. As to quaternary structure, monomer. Zn(2+) serves as cofactor.

Its subcellular location is the cytoplasm. The catalysed reaction is tRNA(Ile) + L-isoleucine + ATP = L-isoleucyl-tRNA(Ile) + AMP + diphosphate. Its function is as follows. Catalyzes the attachment of isoleucine to tRNA(Ile). As IleRS can inadvertently accommodate and process structurally similar amino acids such as valine, to avoid such errors it has two additional distinct tRNA(Ile)-dependent editing activities. One activity is designated as 'pretransfer' editing and involves the hydrolysis of activated Val-AMP. The other activity is designated 'posttransfer' editing and involves deacylation of mischarged Val-tRNA(Ile). The chain is Isoleucine--tRNA ligase from Edwardsiella ictaluri (strain 93-146).